Reading from the N-terminus, the 680-residue chain is DNA ligase (680 aa).

Residues 44 to 48 (DYIYD), 94 to 95 (SL), and Glu124 each bind NAD(+). Catalysis depends on Lys126, which acts as the N6-AMP-lysine intermediate. Residues Arg147, Glu181, Lys297, and Lys321 each coordinate NAD(+). Zn(2+) contacts are provided by Cys415, Cys418, Cys433, and Cys438. Residues 598–680 (DENSFFYGKK…VDEQVKEDGK (83 aa)) form the BRCT domain.

It belongs to the NAD-dependent DNA ligase family. LigA subfamily. The cofactor is Mg(2+). Mn(2+) serves as cofactor.

It carries out the reaction NAD(+) + (deoxyribonucleotide)n-3'-hydroxyl + 5'-phospho-(deoxyribonucleotide)m = (deoxyribonucleotide)n+m + AMP + beta-nicotinamide D-nucleotide.. Its function is as follows. DNA ligase that catalyzes the formation of phosphodiester linkages between 5'-phosphoryl and 3'-hydroxyl groups in double-stranded DNA using NAD as a coenzyme and as the energy source for the reaction. It is essential for DNA replication and repair of damaged DNA. The polypeptide is DNA ligase (Leuconostoc mesenteroides subsp. mesenteroides (strain ATCC 8293 / DSM 20343 / BCRC 11652 / CCM 1803 / JCM 6124 / NCDO 523 / NBRC 100496 / NCIMB 8023 / NCTC 12954 / NRRL B-1118 / 37Y)).